The sequence spans 256 residues: Type III pantothenate kinase (256 aa).

Aspartate 6–valine 13 contacts ATP. Residues tyrosine 101 and glycine 108 to arginine 111 contribute to the substrate site. Aspartate 110 acts as the Proton acceptor in catalysis. K(+) is bound at residue aspartate 130. Threonine 133 provides a ligand contact to ATP. Threonine 185 serves as a coordination point for substrate.

Belongs to the type III pantothenate kinase family. In terms of assembly, homodimer. The cofactor is NH4(+). K(+) is required as a cofactor.

It is found in the cytoplasm. It catalyses the reaction (R)-pantothenate + ATP = (R)-4'-phosphopantothenate + ADP + H(+). Its pathway is cofactor biosynthesis; coenzyme A biosynthesis; CoA from (R)-pantothenate: step 1/5. In terms of biological role, catalyzes the phosphorylation of pantothenate (Pan), the first step in CoA biosynthesis. The chain is Type III pantothenate kinase from Shouchella clausii (strain KSM-K16) (Alkalihalobacillus clausii).